Here is a 60-residue protein sequence, read N- to C-terminus: Large ribosomal subunit protein uL30 (60 aa).

The protein belongs to the universal ribosomal protein uL30 family. Part of the 50S ribosomal subunit.

The protein is Large ribosomal subunit protein uL30 of Sphingopyxis alaskensis (strain DSM 13593 / LMG 18877 / RB2256) (Sphingomonas alaskensis).